Consider the following 419-residue polypeptide: Haloacid dehalogenase-like hydrolase domain-containing 5 (419 aa).

The N-terminal stretch at 1 to 15 is a signal peptide; it reads MAALAGLGVLGAGRH.

It belongs to the HAD-like hydrolase superfamily.

In Mus musculus (Mouse), this protein is Haloacid dehalogenase-like hydrolase domain-containing 5.